Here is an 857-residue protein sequence, read N- to C-terminus: Major vault protein (857 aa).

8 MVP repeats span residues 18-60, 62-122, 123-174, 175-227, 228-282, 284-332, 333-387, and 388-441; these read PYYY…ITIP, RHYC…KVVQ, ANAA…TIIR, PNQA…YVLT, EKNA…NTLT, RQYC…FILG, EDEG…IPLD, and ENEG…VAER. The tract at residues 434 to 453 is disordered; sequence AKDPVAERSDRRGDRAAPRA. The span at 437–453 shows a compositional bias: basic and acidic residues; that stretch reads PVAERSDRRGDRAAPRA. The region spanning 665–694 is the IQ domain; it reads ARHEAERLEQEARGRLERQKIMDEAEAEKS.

In terms of assembly, the vault ribonucleoprotein particle is a huge (400 A x 670 A) cage structure of 12.9 MDa. It consists of a dimer of half-vaults, with each half-vault comprising 39 identical major vault protein (MVP) chains, PARP4 and one or more vault RNAs (vRNAs). Expressed in embryos, tube feet and coelomocytes (at protein level). Not expressed in sperm cells (at protein level).

It localises to the cytoplasm. Its subcellular location is the nucleus. Required for normal vault structure. Vaults are multi-subunit structures that may act as scaffolds for proteins involved in signal transduction. Vaults may also play a role in nucleo-cytoplasmic transport. In Strongylocentrotus purpuratus (Purple sea urchin), this protein is Major vault protein.